The primary structure comprises 204 residues: High frequency lysogenization protein HflD homolog (204 aa).

Belongs to the HflD family.

The protein localises to the cytoplasm. It localises to the cell inner membrane. The protein is High frequency lysogenization protein HflD homolog of Shewanella woodyi (strain ATCC 51908 / MS32).